The sequence spans 524 residues: Dihydromonacolin L monooxygenase mokC (524 aa).

Residues 1-25 (MTVPTDTVSRRLQSLAWSDIKQHAP) are Cytoplasmic-facing. The chain crosses the membrane as a helical; Signal-anchor for type II membrane protein span at residues 26 to 47 (WLPSSRTLVSGFLCLILLQILY). At 48–524 (SRGRKSDLRV…LMMRRRDEDL (477 aa)) the chain is on the lumenal side. 2 N-linked (GlcNAc...) asparagine glycosylation sites follow: Asn396 and Asn401. Cys467 contributes to the heme binding site.

It belongs to the cytochrome P450 family. Heme is required as a cofactor.

Its subcellular location is the endoplasmic reticulum membrane. The catalysed reaction is dihydromonacolin L carboxylate + reduced [NADPH--hemoprotein reductase] + O2 = monacolin L carboxylate + oxidized [NADPH--hemoprotein reductase] + 2 H2O + H(+). It carries out the reaction monacolin L carboxylate + reduced [NADPH--hemoprotein reductase] + O2 = monacolin J carboxylate + oxidized [NADPH--hemoprotein reductase] + H2O + H(+). Its pathway is polyketide biosynthesis; lovastatin biosynthesis. Cytochrome P450 monooxygenase; part of the gene cluster that mediates the biosynthesis of monakolin K, also known as lovastatin, and which acts as a potent competitive inhibitor of HMG-CoA reductase. Monakolin K biosynthesis is performed in two stages. The first stage is catalyzed by the nonaketide synthase mokA, which belongs to type I polyketide synthases and catalyzes the iterative nine-step formation of the polyketide. This PKS stage is completed by the action of dehydrogenase mokE, which catalyzes the NADPH-dependent reduction of the unsaturated tetra-, penta- and heptaketide intermediates that arise during the mokA-mediated biosynthesis of the nonaketide chain and leads to dihydromonacolin L. Covalently bound dihydromonacolin L is released from mokA by the mokD esterase. Conversion of dihydromonacolin L into monacolin L and then monacolin J is subsequently performed with the participation of molecular oxygen and P450 monoogygenase mokC. Finally, mokF performs the conversion of monacoline J to monacoline K through the addition of the side-chain diketide moiety (2R)-2-methylbutanoate produced by the diketide synthase mokB. The protein is Dihydromonacolin L monooxygenase mokC of Monascus pilosus (Red mold).